A 440-amino-acid chain; its full sequence is Discs overgrown protein kinase (440 aa).

Residues 9–277 enclose the Protein kinase domain; sequence YRLGRKIGSG…HLRKLFRNLF (269 aa). ATP-binding positions include 15–23 and lysine 38; that span reads IGSGSFGDI. The Proton acceptor role is filled by aspartate 128. The segment at 221–224 is nuclear localization signal; essential for interaction with Bdbt and important for nuclear localization; it reads KRQK. Residues serine 333 and serine 334 each carry the phosphoserine modification. The segment at 376-440 is disordered; the sequence is SQLIGGNGLN…GGGGGVGNAK (65 aa). The segment covering 413–440 has biased composition (gly residues); the sequence is QGGGGGGGGVGVGGMPSGGGGGGVGNAK.

The protein belongs to the protein kinase superfamily. CK1 Ser/Thr protein kinase family. Casein kinase I subfamily. Forms a complex with per. Interacts with Dlish. Interacts (via nuclear localization signal) with Bdbt. As to expression, detected in the head (at protein level). Expressed in photoreceptor cells of the eyes as well as in the region situated between the optic lobe and the central brain.

It is found in the nucleus. It localises to the cytoplasm. The protein resides in the cytosol. It carries out the reaction L-seryl-[protein] + ATP = O-phospho-L-seryl-[protein] + ADP + H(+). The enzyme catalyses L-threonyl-[protein] + ATP = O-phospho-L-threonyl-[protein] + ADP + H(+). Its function is as follows. Serine/threonine-protein kinase which is involved in the circadian rhythm pathway, viability and planar cell polarity. In the circadian rhythm pathway, phosphorylates the clock gene period (per) and targets it for degradation in the absence of timeless (tim), thus contributing to production of the circadian oscillations of the clock genes. Together with CkIalpha, regulates processing of ci by phosphorylating it, which promotes its binding to slmb, the F-box recognition component of the SCF(slmb) E3 ubiquitin-protein ligase. Involved in the inhibition of apoptosis during cell proliferation and growth arrest in imaginal disks. Also functions in planar cell polarity. This Drosophila melanogaster (Fruit fly) protein is Discs overgrown protein kinase (dco).